Consider the following 118-residue polypeptide: Large ribosomal subunit protein uL18 (118 aa).

The protein belongs to the universal ribosomal protein uL18 family. As to quaternary structure, part of the 50S ribosomal subunit; part of the 5S rRNA/L5/L18/L25 subcomplex. Contacts the 5S and 23S rRNAs.

Functionally, this is one of the proteins that bind and probably mediate the attachment of the 5S RNA into the large ribosomal subunit, where it forms part of the central protuberance. The chain is Large ribosomal subunit protein uL18 from Sulfurovum sp. (strain NBC37-1).